We begin with the raw amino-acid sequence, 268 residues long: Small ribosomal subunit protein mS43 (268 aa).

The transit peptide at 1–23 directs the protein to the mitochondrion; sequence MLNTGLRKGLALSPITHLLKRCS.

This sequence belongs to the mitochondrion-specific ribosomal protein mS43 family. Component of the mitochondrial small ribosomal subunit (mt-SSU). Mature yeast 74S mitochondrial ribosomes consist of a small (37S) and a large (54S) subunit. The 37S small subunit contains a 15S ribosomal RNA (15S mt-rRNA) and at least 32 different proteins. The 54S large subunit contains a 21S rRNA (21S mt-rRNA) and at least 45 different proteins. mS43 forms a dimer with mS42, building a large protuberance adjacent to the mRNA channel exit in the mt-SSU body.

Its subcellular location is the mitochondrion. Functionally, component of the mitochondrial ribosome (mitoribosome), a dedicated translation machinery responsible for the synthesis of mitochondrial genome-encoded proteins, including at least some of the essential transmembrane subunits of the mitochondrial respiratory chain. The mitoribosomes are attached to the mitochondrial inner membrane and translation products are cotranslationally integrated into the membrane. The polypeptide is Small ribosomal subunit protein mS43 (Schizosaccharomyces pombe (strain 972 / ATCC 24843) (Fission yeast)).